The chain runs to 204 residues: UPF0056 membrane protein CT_852 (204 aa).

Transmembrane regions (helical) follow at residues 9-29 (TLLF…IALL), 39-59 (HIIL…VTFG), 66-86 (LGII…SIAI), 107-127 (IFFP…STLG), 138-158 (IVLG…LLSS), and 176-196 (FGIS…STAF).

This sequence belongs to the UPF0056 (MarC) family.

The protein localises to the cell membrane. In Chlamydia trachomatis serovar D (strain ATCC VR-885 / DSM 19411 / UW-3/Cx), this protein is UPF0056 membrane protein CT_852.